The primary structure comprises 230 residues: Probable thioesterase YBR096W (230 aa).

Belongs to the lcsJ thioesterase family.

The sequence is that of Probable thioesterase YBR096W from Saccharomyces cerevisiae (strain ATCC 204508 / S288c) (Baker's yeast).